A 293-amino-acid polypeptide reads, in one-letter code: Protease HtpX homolog (293 aa).

2 consecutive transmembrane segments (helical) span residues 7–26 (ASLL…ALLG) and 30–49 (GMVM…WYYS). H131 lines the Zn(2+) pocket. E132 is a catalytic residue. H135 is a binding site for Zn(2+). 2 consecutive transmembrane segments (helical) span residues 148–168 (ATLA…FWFF) and 180–200 (IGAL…QLGI). E205 provides a ligand contact to Zn(2+).

This sequence belongs to the peptidase M48B family. It depends on Zn(2+) as a cofactor.

The protein resides in the cell inner membrane. In Acaryochloris marina (strain MBIC 11017), this protein is Protease HtpX homolog.